The primary structure comprises 86 residues: Large ribosomal subunit protein bL31 (86 aa).

Belongs to the bacterial ribosomal protein bL31 family. Type A subfamily. Part of the 50S ribosomal subunit.

Binds the 23S rRNA. This is Large ribosomal subunit protein bL31 from Parasynechococcus marenigrum (strain WH8102).